A 305-amino-acid chain; its full sequence is Myb-like transcriptional regulator basR (305 aa).

Myb-like domains lie at 5–59, 60–110, and 111–162; these read RRRW…YNRF, TGGL…HHCL, and NPEL…TILS. The segment at 175-215 is disordered; the sequence is PCCDSPSPSKSSRRPPSTPTSTPQVPGSRQGSSYDPYDYGS. Residues 198–207 show a composition bias toward polar residues; the sequence is QVPGSRQGSS.

Its subcellular location is the nucleus. Its function is as follows. Transcription regulator that acts as a central regulatory node for the integration of external bacterial signals leading to the regulation of secondary metabolite gene clusters such as orsellinic, lecanoric acid, cichorine, 2,4-dihydroxy-3-methyl-6-(2-oxopropyl)benzaldehyde (dba), emericellamide or microperfuranone clusters. The protein is Myb-like transcriptional regulator basR of Emericella nidulans (strain FGSC A4 / ATCC 38163 / CBS 112.46 / NRRL 194 / M139) (Aspergillus nidulans).